The chain runs to 376 residues: Erythronate-4-phosphate dehydrogenase (376 aa).

Ser-45 and Thr-67 together coordinate substrate. Residues 127 to 128, Asp-147, and Thr-176 each bind NAD(+); that span reads QV. Residue Arg-209 is part of the active site. Asp-233 serves as a coordination point for NAD(+). Glu-238 is a catalytic residue. The active-site Proton donor is the His-255. Residue Gly-258 coordinates NAD(+). Tyr-259 is a substrate binding site.

This sequence belongs to the D-isomer specific 2-hydroxyacid dehydrogenase family. PdxB subfamily. Homodimer.

The protein resides in the cytoplasm. The catalysed reaction is 4-phospho-D-erythronate + NAD(+) = (R)-3-hydroxy-2-oxo-4-phosphooxybutanoate + NADH + H(+). Its pathway is cofactor biosynthesis; pyridoxine 5'-phosphate biosynthesis; pyridoxine 5'-phosphate from D-erythrose 4-phosphate: step 2/5. In terms of biological role, catalyzes the oxidation of erythronate-4-phosphate to 3-hydroxy-2-oxo-4-phosphonooxybutanoate. The polypeptide is Erythronate-4-phosphate dehydrogenase (Aliivibrio salmonicida (strain LFI1238) (Vibrio salmonicida (strain LFI1238))).